The primary structure comprises 628 residues: Pinene synthase, chloroplastic (628 aa).

The N-terminal 36 residues, 1–36 (MALVSTAPLASKSCLHKSLISSTHELKALSRTIPAL), are a transit peptide targeting the chloroplast. Mg(2+) is bound by residues Asp379, Asp383, and Asp531. Residues 379–383 (DDMYD) carry the DDXXD motif motif.

Belongs to the terpene synthase family. Tpsd subfamily. Requires Mg(2+) as cofactor. The cofactor is Mn(2+). K(+) is required as a cofactor.

The protein localises to the plastid. It localises to the chloroplast. It catalyses the reaction (2E)-geranyl diphosphate = (1S,5S)-alpha-pinene + diphosphate. It carries out the reaction (2E)-geranyl diphosphate = (1S,5S)-beta-pinene + diphosphate. It functions in the pathway terpene metabolism; oleoresin biosynthesis. In terms of biological role, involved in defensive oleoresin formation in conifers in response to insect attack or other injury. Involved in monoterpene (C10) olefins biosynthesis. A mixture of alpha- and beta-pinene is produced by this enzyme. In Abies grandis (Grand fir), this protein is Pinene synthase, chloroplastic (ag3).